Reading from the N-terminus, the 197-residue chain is Holliday junction branch migration complex subunit RuvA (197 aa).

The segment at 1-63 (MYAYLKGIIT…EDAHLLYGFR (63 aa)) is domain I. The segment at 64 to 142 (SEDEKKLFLS…VAGDDLPAKI (79 aa)) is domain II. The interval 143–147 (AVQAS) is flexible linker. Positions 148–197 (AENQELEEAMEAMLALGYKATELKKIKKFFEGTTDTAENYIKSALKMLVK) are domain III.

Belongs to the RuvA family. Homotetramer. Forms an RuvA(8)-RuvB(12)-Holliday junction (HJ) complex. HJ DNA is sandwiched between 2 RuvA tetramers; dsDNA enters through RuvA and exits via RuvB. An RuvB hexamer assembles on each DNA strand where it exits the tetramer. Each RuvB hexamer is contacted by two RuvA subunits (via domain III) on 2 adjacent RuvB subunits; this complex drives branch migration. In the full resolvosome a probable DNA-RuvA(4)-RuvB(12)-RuvC(2) complex forms which resolves the HJ.

Its subcellular location is the cytoplasm. Functionally, the RuvA-RuvB-RuvC complex processes Holliday junction (HJ) DNA during genetic recombination and DNA repair, while the RuvA-RuvB complex plays an important role in the rescue of blocked DNA replication forks via replication fork reversal (RFR). RuvA specifically binds to HJ cruciform DNA, conferring on it an open structure. The RuvB hexamer acts as an ATP-dependent pump, pulling dsDNA into and through the RuvAB complex. HJ branch migration allows RuvC to scan DNA until it finds its consensus sequence, where it cleaves and resolves the cruciform DNA. The protein is Holliday junction branch migration complex subunit RuvA of Streptococcus pneumoniae (strain Taiwan19F-14).